Here is a 316-residue protein sequence, read N- to C-terminus: Acetaldehyde dehydrogenase (316 aa).

11–14 is an NAD(+) binding site; it reads SGNI. Cys131 (acyl-thioester intermediate) is an active-site residue. NAD(+) contacts are provided by residues 162 to 170 and Asn289; that span reads SAGPGTRAN.

It belongs to the acetaldehyde dehydrogenase family. As to quaternary structure, interacts with MhpE.

It carries out the reaction acetaldehyde + NAD(+) + CoA = acetyl-CoA + NADH + H(+). The protein operates within aromatic compound metabolism; 3-phenylpropanoate degradation. In terms of biological role, catalyzes the conversion of acetaldehyde to acetyl-CoA, using NAD(+) and coenzyme A. Is the final enzyme in the meta-cleavage pathway for the degradation of aromatic compounds. The sequence is that of Acetaldehyde dehydrogenase from Klebsiella pneumoniae subsp. pneumoniae (strain ATCC 700721 / MGH 78578).